Reading from the N-terminus, the 92-residue chain is Small ribosomal subunit protein uS19c (92 aa).

This sequence belongs to the universal ribosomal protein uS19 family.

It is found in the plastid. The protein localises to the chloroplast. Protein S19 forms a complex with S13 that binds strongly to the 16S ribosomal RNA. This Glycine max (Soybean) protein is Small ribosomal subunit protein uS19c (rps19).